We begin with the raw amino-acid sequence, 734 residues long: Photosystem I P700 chlorophyll a apoprotein A2 (734 aa).

A run of 8 helical transmembrane segments spans residues 46–69 (IFASHFGQLAIIFLWTSGNLFHVA), 135–158 (LYTGAIFLLFLSFISLLAGWLHLQ), 175–199 (LNHHLSGLFGVSSLAWAGHLVHVAI), 273–291 (VAHHHLAIAFLFLIGGLMY), 330–353 (IHFQLGLALASLGVITSLVAQHMY), 369–395 (AALYTHHQYIAGFIMTGAFAHGPIFFI), 417–439 (AIISHLSWASLFLGFHTLGLYVH), and 517–535 (FLVHHAIALGLHTTTLILV). [4Fe-4S] cluster-binding residues include Cys-559 and Cys-568. Transmembrane regions (helical) follow at residues 575 to 596 (DFYLAVFWMLNTIGWVTFYWHW) and 643 to 665 (LSVWAWMFLFGHLVWATGFMFLI). The chlorophyll a site is built by His-654, Met-662, and Tyr-670. Trp-671 lines the phylloquinone pocket. Residues 707–727 (LVGLVHFSVGYIFTYAAFLIA) form a helical membrane-spanning segment.

It belongs to the PsaA/PsaB family. As to quaternary structure, the PsaA/B heterodimer binds the P700 chlorophyll special pair and subsequent electron acceptors. PSI consists of a core antenna complex that captures photons, and an electron transfer chain that converts photonic excitation into a charge separation. The eukaryotic PSI reaction center is composed of at least 11 subunits. P700 is a chlorophyll a/chlorophyll a' dimer, A0 is one or more chlorophyll a, A1 is one or both phylloquinones and FX is a shared 4Fe-4S iron-sulfur center. serves as cofactor.

Its subcellular location is the plastid. It localises to the chloroplast thylakoid membrane. The catalysed reaction is reduced [plastocyanin] + hnu + oxidized [2Fe-2S]-[ferredoxin] = oxidized [plastocyanin] + reduced [2Fe-2S]-[ferredoxin]. PsaA and PsaB bind P700, the primary electron donor of photosystem I (PSI), as well as the electron acceptors A0, A1 and FX. PSI is a plastocyanin-ferredoxin oxidoreductase, converting photonic excitation into a charge separation, which transfers an electron from the donor P700 chlorophyll pair to the spectroscopically characterized acceptors A0, A1, FX, FA and FB in turn. Oxidized P700 is reduced on the lumenal side of the thylakoid membrane by plastocyanin. The protein is Photosystem I P700 chlorophyll a apoprotein A2 of Pisum sativum (Garden pea).